Here is a 160-residue protein sequence, read N- to C-terminus: Transcription elongation factor GreA (160 aa).

A coiled-coil region spans residues 1 to 72 (MAEKTYPMTL…QISSLETKIR (72 aa)).

Belongs to the GreA/GreB family.

Functionally, necessary for efficient RNA polymerase transcription elongation past template-encoded arresting sites. The arresting sites in DNA have the property of trapping a certain fraction of elongating RNA polymerases that pass through, resulting in locked ternary complexes. Cleavage of the nascent transcript by cleavage factors such as GreA or GreB allows the resumption of elongation from the new 3'terminus. GreA releases sequences of 2 to 3 nucleotides. The chain is Transcription elongation factor GreA from Streptococcus pneumoniae (strain Hungary19A-6).